The chain runs to 489 residues: Adenosylhomocysteinase (489 aa).

Residues Thr-68, Asp-151, and Glu-213 each contribute to the substrate site. 214–216 (TTT) serves as a coordination point for NAD(+). 2 residues coordinate substrate: Lys-243 and Asp-247. Residues Asn-248, 277–282 (GYGDVG), Glu-300, Asn-335, 356–358 (IGH), and Asn-403 each bind NAD(+).

Belongs to the adenosylhomocysteinase family. It depends on NAD(+) as a cofactor.

Its subcellular location is the cytoplasm. It carries out the reaction S-adenosyl-L-homocysteine + H2O = L-homocysteine + adenosine. Its pathway is amino-acid biosynthesis; L-homocysteine biosynthesis; L-homocysteine from S-adenosyl-L-homocysteine: step 1/1. Functionally, may play a key role in the regulation of the intracellular concentration of adenosylhomocysteine. This Mycobacterium sp. (strain JLS) protein is Adenosylhomocysteinase.